Here is a 156-residue protein sequence, read N- to C-terminus: Snaclec jerdonibitin subunit alpha (156 aa).

An N-terminal signal peptide occupies residues 1 to 23 (MGRFIFVSFGLLVVFLSLSGTGA). 3 disulfides stabilise this stretch: Cys25–Cys36, Cys53–Cys150, and Cys125–Cys142. The C-type lectin domain occupies 32 to 151 (FRQYCYRVFK…CGQQHLFMCK (120 aa)).

The protein belongs to the snaclec family. As to quaternary structure, heterodimer of subunits alpha and beta; disulfide-linked. Expressed by the venom gland.

It is found in the secreted. Snaclec that dose-dependently inhibits platelet aggregation induced by ristocetin or low-dose thrombin, but not by high-dose thrombin. Binds to GPIbalpha (GP1BA). In vivo, also dose-dependently induces thrombocytopenia of mice and platelet counts remains at very low level even after 18 hours intravenous injection. The polypeptide is Snaclec jerdonibitin subunit alpha (Protobothrops jerdonii (Jerdon's pitviper)).